Consider the following 292-residue polypeptide: 32 kDa protein (292 aa).

Its function is as follows. May be involved in transmission by vector nematode species. This is 32 kDa protein from Bidens pilosa (Hairy beggarticks).